A 758-amino-acid chain; its full sequence is 5-methyltetrahydropteroyltriglutamate--homocysteine methyltransferase (758 aa).

5-methyltetrahydropteroyltri-L-glutamate contacts are provided by residues 16-19 (RELK) and K112. L-homocysteine contacts are provided by residues 433–435 (IGS) and E486. Residues 433-435 (IGS) and E486 contribute to the L-methionine site. 5-methyltetrahydropteroyltri-L-glutamate-binding positions include 517-518 (RC) and W563. D601 serves as a coordination point for L-homocysteine. D601 serves as a coordination point for L-methionine. A 5-methyltetrahydropteroyltri-L-glutamate-binding site is contributed by E607. Residues H643, C645, and E667 each contribute to the Zn(2+) site. H696 serves as the catalytic Proton donor. C728 is a Zn(2+) binding site.

The protein belongs to the vitamin-B12 independent methionine synthase family. The cofactor is Zn(2+).

The enzyme catalyses 5-methyltetrahydropteroyltri-L-glutamate + L-homocysteine = tetrahydropteroyltri-L-glutamate + L-methionine. It participates in amino-acid biosynthesis; L-methionine biosynthesis via de novo pathway; L-methionine from L-homocysteine (MetE route): step 1/1. Catalyzes the transfer of a methyl group from 5-methyltetrahydrofolate to homocysteine resulting in methionine formation. The chain is 5-methyltetrahydropteroyltriglutamate--homocysteine methyltransferase from Neisseria meningitidis serogroup C (strain 053442).